The primary structure comprises 608 residues: DNA mismatch repair protein MutL (608 aa).

The protein belongs to the DNA mismatch repair MutL/HexB family.

In terms of biological role, this protein is involved in the repair of mismatches in DNA. It is required for dam-dependent methyl-directed DNA mismatch repair. May act as a 'molecular matchmaker', a protein that promotes the formation of a stable complex between two or more DNA-binding proteins in an ATP-dependent manner without itself being part of a final effector complex. This Anoxybacillus flavithermus (strain DSM 21510 / WK1) protein is DNA mismatch repair protein MutL.